The chain runs to 243 residues: Proteasome subunit beta 1 (243 aa).

Residues 1–14 (MRAPQHNSDFSRTV) show a composition bias toward polar residues. A disordered region spans residues 1 to 34 (MRAPQHNSDFSRTVDQLADDPNPYEPEIGSMPQN). Positions 1 to 48 (MRAPQHNSDFSRTVDQLADDPNPYEPEIGSMPQNDLTRADLDNVNKTG) are cleaved as a propeptide — removed in mature form; by autocatalysis. Thr-49 serves as the catalytic Nucleophile.

This sequence belongs to the peptidase T1B family. As to quaternary structure, the 20S proteasome core is composed of 14 alpha and 14 beta subunits that assemble into four stacked heptameric rings, resulting in a barrel-shaped structure. The two inner rings, each composed of seven catalytic beta subunits, are sandwiched by two outer rings, each composed of seven alpha subunits. The catalytic chamber with the active sites is on the inside of the barrel. Has a gated structure, the ends of the cylinder being occluded by the N-termini of the alpha-subunits. Is capped at one or both ends by the proteasome regulatory ATPase, PAN.

The protein localises to the cytoplasm. The catalysed reaction is Cleavage of peptide bonds with very broad specificity.. The formation of the proteasomal ATPase PAN-20S proteasome complex, via the docking of the C-termini of PAN into the intersubunit pockets in the alpha-rings, triggers opening of the gate for substrate entry. Interconversion between the open-gate and close-gate conformations leads to a dynamic regulation of the 20S proteasome proteolysis activity. In terms of biological role, component of the proteasome core, a large protease complex with broad specificity involved in protein degradation. This is Proteasome subunit beta 1 from Haloterrigena turkmenica (strain ATCC 51198 / DSM 5511 / JCM 9101 / NCIMB 13204 / VKM B-1734 / 4k) (Halococcus turkmenicus).